The sequence spans 485 residues: MTVSKKDSGKTSPGNIVVVSNRLPVTISKNAMGKYEYKFSSGGLVTALQGLKKTSTFQWYGWPSLEIPDDEKPVVKKDLLEKFNAIPIFLSDEIADLHYNGFSNSILWPLFHYHPGEINFDENAWLAYNEANATFASEICGNLQDNDLVWVHDYHLMLLPEMLSAHIQRKGLKNIKLGWFLHTPFPSSEIYRILPVRQEILNGVLSCDLIGFHTYDYARHFLSSIQRCLNVNTLPNGVEYQGRFVNVGAFPIGIDVDTFKEGLQKENVKQRIRTLQERFKGCKIMVGVDRLDYIKGVPQKLHAMEVFLNEHPEWIGKVVLVQLAIPSRGDVEEYQYLRSVVNELVGRINGQFGTIEFVPIHFMHKSIPFEELISLYAVSDACIVSSTRDGMNLVSYEYIACRKKGSLILSEFTGAAQSLNGALIVNPWNTDELSDSINEALTLPDEKKDSNWEKLYKYISKYTSAYWGENFVHELNATGTIKTGQ.

Tyr99 and Asp153 together coordinate D-glucose 6-phosphate. UDP contacts are provided by Arg290 and Lys295. UDP-alpha-D-glucose-binding residues include Arg290 and Lys295. A D-glucose 6-phosphate-binding site is contributed by Arg328. UDP contacts are provided by residues Ile367 and 393–397; that span reads LVSYE. Residues Ile367 and 389–397 contribute to the UDP-alpha-D-glucose site; that span reads DGMNLVSYE.

This sequence belongs to the glycosyltransferase 20 family.

It carries out the reaction D-glucose 6-phosphate + UDP-alpha-D-glucose = alpha,alpha-trehalose 6-phosphate + UDP + H(+). It participates in carbohydrate biosynthesis. Synthase catalytic subunit of the trehalose synthase complex that catalyzes the production of trehalose from glucose-6-phosphate and UDP-alpha-D-glucose in a two step process. The protein is Alpha,alpha-trehalose-phosphate synthase [UDP-forming] of Zygosaccharomyces rouxii.